Here is a 643-residue protein sequence, read N- to C-terminus: Zinc finger protein 23 (643 aa).

In terms of domain architecture, KRAB spans 1 to 43; the sequence is MLENYGNVASLGFPLLKPAVISQLEGGSELGGSSPLAAGTGLQ. Lysine 157 participates in a covalent cross-link: Glycyl lysine isopeptide (Lys-Gly) (interchain with G-Cter in SUMO2). A C2H2-type 1; degenerate zinc finger spans residues 168-190; the sequence is FKCEELVEPFRCDSQLIQHQENN. 16 consecutive C2H2-type zinc fingers follow at residues 196-218, 224-246, 252-274, 280-302, 308-330, 336-358, 364-386, 392-414, 420-442, 448-470, 476-498, 504-526, 532-554, 560-582, 588-610, and 616-638; these read YQCS…QRLH, FKCV…QTIH, YQCK…QRIH, YQCK…QRVH, YECN…QRIH, YECN…QSIH, YECT…QRIH, YECN…LRIH, FECN…HRIH, FKCM…QRIH, FQCK…QRSH, FRCV…QTVH, and YMCS…QSVH.

This sequence belongs to the krueppel C2H2-type zinc-finger protein family.

It is found in the nucleus. Functionally, may be involved in transcriptional regulation. May have a role in embryonic development. The sequence is that of Zinc finger protein 23 (ZNF23) from Homo sapiens (Human).